The following is a 107-amino-acid chain: Auxin-responsive protein SAUR50 (107 aa).

It belongs to the ARG7 family. In terms of assembly, interacts with BZR1. As to expression, expressed in cotyledons, leaves, flowers and siliques.

The protein localises to the cell membrane. Its function is as follows. Provide a mechanistic link between auxin and plasma membrane H(+)-ATPases (PM H(+)-ATPases, e.g. AHA1 and AHA2), and triggers PM H(+)-ATPases activity by promoting phosphorylation of their C-terminal autoinhibitory domain as a result of PP2C-D subfamily of type 2C phosphatases inhibition, thus leading to the acidification of the apoplast and the facilitation of solutes and water uptake to drive cell expansion. Triggers plant growth probably by promoting cell elongation. Regulates branch angles and bending. Effector of hormonal and environmental signals in plant growth. This chain is Auxin-responsive protein SAUR50, found in Arabidopsis thaliana (Mouse-ear cress).